We begin with the raw amino-acid sequence, 176 residues long: NAD(P)H-quinone oxidoreductase subunit J (176 aa).

It belongs to the complex I 30 kDa subunit family. In terms of assembly, NDH-1 can be composed of about 15 different subunits; different subcomplexes with different compositions have been identified which probably have different functions.

It localises to the cellular thylakoid membrane. It catalyses the reaction a plastoquinone + NADH + (n+1) H(+)(in) = a plastoquinol + NAD(+) + n H(+)(out). The enzyme catalyses a plastoquinone + NADPH + (n+1) H(+)(in) = a plastoquinol + NADP(+) + n H(+)(out). Its function is as follows. NDH-1 shuttles electrons from an unknown electron donor, via FMN and iron-sulfur (Fe-S) centers, to quinones in the respiratory and/or the photosynthetic chain. The immediate electron acceptor for the enzyme in this species is believed to be plastoquinone. Couples the redox reaction to proton translocation, and thus conserves the redox energy in a proton gradient. Cyanobacterial NDH-1 also plays a role in inorganic carbon-concentration. This is NAD(P)H-quinone oxidoreductase subunit J from Prochlorococcus marinus (strain MIT 9515).